The chain runs to 577 residues: Hemagglutinin-neuraminidase (577 aa).

Topologically, residues 1–26 (MDRAVSQVALENDEREAKNTWRLIFR) are intravirion. A helical membrane pass occupies residues 27 to 47 (IAILFLTVVTLAISVASLLYS). The Virion surface portion of the chain corresponds to 48 to 577 (MGASTPSDLV…DDGVREARSG (530 aa)). Asn-119 is a glycosylation site (N-linked (GlcNAc...) asparagine; by host). Residues 124 to 152 (GAPIHDPDYIGGIGKELIVDDASDVTSFY) form an important for interaction with fusion/F protein region. Intrachain disulfides connect Cys-172/Cys-196, Cys-186/Cys-247, and Cys-238/Cys-251. Positions 234-239 (NRKSCS) are involved in neuraminidase activity. 2 N-linked (GlcNAc...) asparagine; by host glycosylation sites follow: Asn-341 and Asn-433. Disulfide bonds link Cys-344–Cys-461 and Cys-455–Cys-465. 2 N-linked (GlcNAc...) asparagine; by host glycosylation sites follow: Asn-481 and Asn-538. An intrachain disulfide couples Cys-531 to Cys-542.

Belongs to the paramyxoviruses hemagglutinin-neuraminidase family. As to quaternary structure, homotetramer; composed of disulfide-linked homodimers. Interacts with F protein trimer. Interacts with host CG-1B; this interaction inhibits viral adsorption and replication rather than internalization.

Its subcellular location is the virion membrane. The protein resides in the host cell membrane. The enzyme catalyses Hydrolysis of alpha-(2-&gt;3)-, alpha-(2-&gt;6)-, alpha-(2-&gt;8)- glycosidic linkages of terminal sialic acid residues in oligosaccharides, glycoproteins, glycolipids, colominic acid and synthetic substrates.. In terms of biological role, mediates the viral entry into the host cell together with fusion/F protein. Attaches the virus to sialic acid-containing cell receptors and thereby initiates infection. Binding of HN protein to the receptor induces a conformational change that allows the F protein to trigger virion/cell membranes fusion. Neuraminidase activity ensures the efficient spread of the virus by dissociating the mature virions from the neuraminic acid containing glycoproteins. This chain is Hemagglutinin-neuraminidase (HN), found in Newcastle disease virus (strain Chicken/United States/LaSota/46) (NDV).